The sequence spans 144 residues: Protein MIX23 (144 aa).

An N-acetylalanine modification is found at Ala2. A coiled-coil region spans residues 82–120 (VKNLREEREKNLDDLTLLKQLRKEQTKLKWMQSELNVEE). Lys100 is subject to N6-acetyllysine.

Belongs to the MIX23 family.

The chain is Protein MIX23 from Homo sapiens (Human).